Here is a 207-residue protein sequence, read N- to C-terminus: Large ribosomal subunit protein uL4 (207 aa).

Residues 44-76 form a disordered region; that stretch reads RRQGTQSTKTKSEVRGGGKKPWRQKGTGRARQG. A compositionally biased stretch (basic residues) spans 60–71; it reads GGKKPWRQKGTG.

It belongs to the universal ribosomal protein uL4 family. Part of the 50S ribosomal subunit.

Functionally, one of the primary rRNA binding proteins, this protein initially binds near the 5'-end of the 23S rRNA. It is important during the early stages of 50S assembly. It makes multiple contacts with different domains of the 23S rRNA in the assembled 50S subunit and ribosome. In terms of biological role, forms part of the polypeptide exit tunnel. This chain is Large ribosomal subunit protein uL4, found in Ruminiclostridium cellulolyticum (strain ATCC 35319 / DSM 5812 / JCM 6584 / H10) (Clostridium cellulolyticum).